We begin with the raw amino-acid sequence, 205 residues long: UPF0301 protein AZC_0488 (205 aa).

This sequence belongs to the UPF0301 (AlgH) family.

This chain is UPF0301 protein AZC_0488, found in Azorhizobium caulinodans (strain ATCC 43989 / DSM 5975 / JCM 20966 / LMG 6465 / NBRC 14845 / NCIMB 13405 / ORS 571).